The primary structure comprises 112 residues: Protein FAM32A (112 aa).

A disordered region spans residues 23-56 (TKRKKKKKDKDKAKMLEAMGTSKKSEEEKRRCLD). The segment covering 45 to 56 (KKSEEEKRRCLD) has biased composition (basic and acidic residues).

This sequence belongs to the FAM32 family. In terms of tissue distribution, widely expressed, with highest level in pancreas and lowest in muscle.

The protein localises to the nucleus. In terms of biological role, may induce G2 arrest and apoptosis. May also increase cell sensitivity to apoptotic stimuli. In cell lines, may play a role in the inhibition of anchor-independent cell growth. The sequence is that of Protein FAM32A (Fam32a) from Mus musculus (Mouse).